Reading from the N-terminus, the 707-residue chain is MYTVNPQLVVLVDRQQQLREVRYLSLYGTLDEASPLYYFAKQHLRAETLAVERRHILLTLKISQLKGYLCHLLGLREDIIIYSHKNNLEYSYVDNTIFNPFTMTQKKTLIKADSFLYNVYVDACDFLVVWVARAQDTPVPEFGSFEEVDANILKFEARLVEMFPELDLEFSIQSKFNNVFRTNLRSTGLRNIVKRNQDNRILFIKTDEFFITMSGNHFVLNNEALNLSIWDAQGRLAISSDGDTITVNDVRLFTELVTDSNLQMERIKGDITYRIFLLSPITSKIKLDIETSFIFVETATNNILLSADKKISIILAKNHISIKVKNHIPNIEKYFTFLVIFINRMFNAVQQAVDFTKIETIYWSRICQNTRDKNRKPVIVSSLDANMERVSDNFFRSPTREVFVNSNNIMFSCVDPLGKYNSVGFLAIFYKLQKMCIPCCFLRSQAHTDTFISCVHHRELDRQLVSPYVLNFGKIVTEAKISFLPILFDQFFNEGLRIEFEADHKRLKATDGYHVVKCCTRSEITRLRTQRDIIQFVNAEQNTLIAGDMVYFPMHGARSAGAEHQRVYILIQEIVHEVVMVQKAHDSDRIRFRELERNRLWEFFPYRVPSARIKEEHGLVLTTDGFYVDGKLFSEPLSTRYVAFTENVGTAGVAAKYFAPVFKYVVTEARELFIKTWLLNVMMQLGLTGESSAAQTREALERYYRLS.

It belongs to the poxviridae VETF large subunit family. In terms of assembly, heterodimer of a 70 kDa and a 82 kDa subunit. Part of the early transcription complex composed of ETF, RAP94, and the DNA-directed RNA polymerase.

The protein resides in the virion. In terms of biological role, acts with RNA polymerase to initiate transcription from early gene promoters. Is recruited by the RPO-associated protein of 94 kDa (RAP94) to form the early transcription complex, which also contains the core RNA polymerase. ETF heterodimer binds to early gene promoters. In Molluscum contagiosum virus subtype 1 (MOCV), this protein is Early transcription factor 82 kDa subunit (VETFL).